Reading from the N-terminus, the 239-residue chain is 4-hydroxy-tetrahydrodipicolinate reductase (239 aa).

NAD(+) contacts are provided by residues 12-17 (GASGRM), 94-96 (GTT), and 118-121 (ASNF). Histidine 150 (proton donor/acceptor) is an active-site residue. Histidine 151 lines the (S)-2,3,4,5-tetrahydrodipicolinate pocket. The active-site Proton donor is the lysine 154. Residue 160–161 (GT) coordinates (S)-2,3,4,5-tetrahydrodipicolinate.

Belongs to the DapB family.

Its subcellular location is the cytoplasm. The catalysed reaction is (S)-2,3,4,5-tetrahydrodipicolinate + NAD(+) + H2O = (2S,4S)-4-hydroxy-2,3,4,5-tetrahydrodipicolinate + NADH + H(+). It carries out the reaction (S)-2,3,4,5-tetrahydrodipicolinate + NADP(+) + H2O = (2S,4S)-4-hydroxy-2,3,4,5-tetrahydrodipicolinate + NADPH + H(+). It functions in the pathway amino-acid biosynthesis; L-lysine biosynthesis via DAP pathway; (S)-tetrahydrodipicolinate from L-aspartate: step 4/4. Functionally, catalyzes the conversion of 4-hydroxy-tetrahydrodipicolinate (HTPA) to tetrahydrodipicolinate. The sequence is that of 4-hydroxy-tetrahydrodipicolinate reductase from Stenotrophomonas maltophilia (strain R551-3).